We begin with the raw amino-acid sequence, 201 residues long: MNPLYLASGSPRRRELLTQIGVPFTAISADIDETPLADESPAAYVERLARGKAAAGRGLITSSESQAPACVLGADTAVVLDGRILGKPLDQADALQMLMALSGREHEVFTAIALLDGERCESRVVRSLVRFRPISPAEAALYWASGEPCDKAGGYAIQGLAAVFVAGLNGSYSAVVGLPVCETAELLGHFGIPCWQNLPVR.

Residue Asp-75 is the Proton acceptor of the active site.

The protein belongs to the Maf family. YhdE subfamily. A divalent metal cation is required as a cofactor.

The protein localises to the cytoplasm. The enzyme catalyses dTTP + H2O = dTMP + diphosphate + H(+). The catalysed reaction is UTP + H2O = UMP + diphosphate + H(+). Nucleoside triphosphate pyrophosphatase that hydrolyzes dTTP and UTP. May have a dual role in cell division arrest and in preventing the incorporation of modified nucleotides into cellular nucleic acids. The polypeptide is dTTP/UTP pyrophosphatase (Pseudomonas fluorescens (strain ATCC BAA-477 / NRRL B-23932 / Pf-5)).